The primary structure comprises 194 residues: Large ribosomal subunit protein eL15 (194 aa).

A disordered region spans residues 168 to 194 (RSRGLLNKGKGAEKVRPSIRAHQGKGK). A compositionally biased stretch (basic residues) spans 184–194 (PSIRAHQGKGK).

The protein belongs to the eukaryotic ribosomal protein eL15 family. In terms of assembly, part of the 50S ribosomal subunit.

In Thermococcus kodakarensis (strain ATCC BAA-918 / JCM 12380 / KOD1) (Pyrococcus kodakaraensis (strain KOD1)), this protein is Large ribosomal subunit protein eL15.